A 345-amino-acid polypeptide reads, in one-letter code: Biotin synthase (345 aa).

The Radical SAM core domain occupies 67–295 (YKVQLASLLS…KSRIRLSAGR (229 aa)). Cys82, Cys86, and Cys89 together coordinate [4Fe-4S] cluster. Residues Cys126, Cys158, Cys218, and Arg290 each coordinate [2Fe-2S] cluster.

This sequence belongs to the radical SAM superfamily. Biotin synthase family. Homodimer. [4Fe-4S] cluster is required as a cofactor. The cofactor is [2Fe-2S] cluster.

It catalyses the reaction (4R,5S)-dethiobiotin + (sulfur carrier)-SH + 2 reduced [2Fe-2S]-[ferredoxin] + 2 S-adenosyl-L-methionine = (sulfur carrier)-H + biotin + 2 5'-deoxyadenosine + 2 L-methionine + 2 oxidized [2Fe-2S]-[ferredoxin]. It functions in the pathway cofactor biosynthesis; biotin biosynthesis; biotin from 7,8-diaminononanoate: step 2/2. Catalyzes the conversion of dethiobiotin (DTB) to biotin by the insertion of a sulfur atom into dethiobiotin via a radical-based mechanism. This Prochlorococcus marinus (strain NATL2A) protein is Biotin synthase.